The sequence spans 367 residues: Putative C-&gt;U-editing enzyme APOBEC-4 (367 aa).

Residues 61–177 enclose the CMP/dCMP-type deaminase domain; the sequence is PQTKHLTFYE…AWNREALRSL (117 aa). Position 93 (histidine 93) interacts with Zn(2+). Glutamate 95 (proton donor) is an active-site residue. Zn(2+) is bound by residues cysteine 127 and cysteine 134.

Belongs to the cytidine and deoxycytidylate deaminase family. The cofactor is Zn(2+). Predominantly expressed in testis.

Its function is as follows. Putative C to U editing enzyme whose physiological substrate is not yet known. This is Putative C-&gt;U-editing enzyme APOBEC-4 (APOBEC4) from Homo sapiens (Human).